Consider the following 121-residue polypeptide: Small ribosomal subunit protein uS13 (121 aa).

The tract at residues 91 to 121 (HRRGLPVRGQNTKNNARTRKGPRKTVANKKK) is disordered. Residues 106 to 121 (ARTRKGPRKTVANKKK) show a composition bias toward basic residues.

Belongs to the universal ribosomal protein uS13 family. In terms of assembly, part of the 30S ribosomal subunit. Forms a loose heterodimer with protein S19. Forms two bridges to the 50S subunit in the 70S ribosome.

Its function is as follows. Located at the top of the head of the 30S subunit, it contacts several helices of the 16S rRNA. In the 70S ribosome it contacts the 23S rRNA (bridge B1a) and protein L5 of the 50S subunit (bridge B1b), connecting the 2 subunits; these bridges are implicated in subunit movement. Contacts the tRNAs in the A and P-sites. This is Small ribosomal subunit protein uS13 from Lysinibacillus sphaericus (strain C3-41).